We begin with the raw amino-acid sequence, 64 residues long: Large ribosomal subunit protein bL33 (64 aa).

The protein belongs to the bacterial ribosomal protein bL33 family.

The polypeptide is Large ribosomal subunit protein bL33 (Parasynechococcus marenigrum (strain WH8102)).